We begin with the raw amino-acid sequence, 104 residues long: Protein RnfH (104 aa).

This sequence belongs to the UPF0125 (RnfH) family.

This Pseudomonas savastanoi pv. phaseolicola (strain 1448A / Race 6) (Pseudomonas syringae pv. phaseolicola (strain 1448A / Race 6)) protein is Protein RnfH.